A 342-amino-acid polypeptide reads, in one-letter code: 11-beta-hydroxysteroid dehydrogenase-like 6 (342 aa).

Residues 10-30 (FLFPLLTLYALLVFYPTYQRL) form a helical; Signal-anchor for type II membrane protein membrane-spanning segment. Residues 54 to 80 (GAAS…VDIR) and Asp105 contribute to the NADP(+) site. Residue Ser184 participates in substrate binding. Tyr197 functions as the Proton acceptor in the catalytic mechanism. Residues 197–201 (YCASK) and Lys201 each bind NADP(+).

This sequence belongs to the short-chain dehydrogenases/reductases (SDR) family.

It localises to the membrane. In Arabidopsis thaliana (Mouse-ear cress), this protein is 11-beta-hydroxysteroid dehydrogenase-like 6 (HSD6).